The primary structure comprises 137 residues: Protein CTLA-2-alpha (137 aa).

Positions 1–27 are cleaved as a signal peptide; that stretch reads MMVSICEQKLQHFSAVFLLILCLGMMS. Tandem repeats lie at residues 39–41 and 42–44. The 2 X 3 AA tandem repeats of E-W-K stretch occupies residues 39 to 44; sequence EWKEWK. The disordered stretch occupies residues 114–137; that stretch reads APDLPEYEDLGKNSYLTPGRAQPE.

To the propeptide regions of cysteine proteases.

Its subcellular location is the secreted. Functionally, not known, expressed in activated T-cell. This Mus musculus (Mouse) protein is Protein CTLA-2-alpha (Ctla2a).